Here is a 93-residue protein sequence, read N- to C-terminus: YcgL domain-containing protein PSHAb0508 (93 aa).

One can recognise a YcgL domain in the interval 1–85; sequence MLTAVYKSKK…PQENLLSQLR (85 aa).

This Pseudoalteromonas translucida (strain TAC 125) protein is YcgL domain-containing protein PSHAb0508.